Here is a 406-residue protein sequence, read N- to C-terminus: O-glycosyltransferase PaGT (406 aa).

The disordered stretch occupies residues 1-26 (MSPPSQIKPPQGTTPVPPSELDPRSD).

It belongs to the afumC glycosyltransferase family.

It functions in the pathway mycotoxin biosynthesis. Functionally, O-glycosyltransferase; part of the 2 gene clusters that mediate the biosynthesis of fusicoccins, diterpene glucosides that display phytohormone-like activity and function as potent activators of plasma membrane H(+)-ATPases in plants by modifying 14-3-3 proteins and cause the plant disease constriction canker. The first step in the pathway is performed by the fusicoccadiene synthase PaFS that possesses both prenyl transferase and terpene cyclase activity, converting isopentenyl diphosphate and dimethylallyl diphosphate into geranylgeranyl diphosphate (GGDP) and successively converting GGDP into fusicocca-2,10(14)-diene, a precursor for fusicoccin H. The second step is the oxidation at the C-8 position by the cytochrome P450 monooxygenase PaP450-2 to yield fusicocca-2,10(14)-diene-8-beta-ol. The cytochrome P450 monooxygenase PaP450-1 then catalyzes the hydroxylation at the C-16 position to produce fusicocca-2,10(14)-diene-8-beta,16-diol. The dioxygenase fc-dox then catalyzes the 16-oxydation of fusicocca-2,10(14)-diene-8-beta,16-diol to yield an aldehyde (8-beta-hydroxyfusicocca-1,10(14)-dien-16-al). The short-chain dehydrogenase/reductase fc-sdr catalyzes the reduction of the aldehyde to yield fusicocca-1,10(14)-diene-8-beta,16-diol. The next step is the hydroxylation at C-9 performed by the cytochrome P450 monooxygenase PaP450-3 that leads to fusicoccin H aglycon which is glycosylated to fusicoccin H by the O-glycosyltransferase PaGT. Hydroxylation at C-12 by the cytochrome P450 monooxygenase PaP450-4 leads then to the production of fusicoccin Q and is followed by methylation by the O-methyltransferase PaMT to yield fusicoccin P. Fusicoccin P is further converted to fusicoccin J via prenylation by the O-glucose prenyltransferase PaPT. Cytochrome P450 monooxygenase PaP450-5 then performs hydroxylation at C-19 to yield dideacetyl-fusicoccin A which is acetylated to 3'-O-deacetyl-fusicoccin A by the O-acetyltransferase PaAT-2. Finally, a another acetylation by the O-acetyltransferase PaAT-1 yields fusicoccin A. This chain is O-glycosyltransferase PaGT, found in Phomopsis amygdali (Fusicoccum amygdali).